The primary structure comprises 206 residues: Large ribosomal subunit protein uL4 (206 aa).

The tract at residues 47 to 94 (NRAQKGRSEIAKSTRKPFRQKGTGNARAGMASSPLWRGGGKIFPNSPD) is disordered.

The protein belongs to the universal ribosomal protein uL4 family. Part of the 50S ribosomal subunit.

Its function is as follows. One of the primary rRNA binding proteins, this protein initially binds near the 5'-end of the 23S rRNA. It is important during the early stages of 50S assembly. It makes multiple contacts with different domains of the 23S rRNA in the assembled 50S subunit and ribosome. Functionally, forms part of the polypeptide exit tunnel. The protein is Large ribosomal subunit protein uL4 of Azoarcus sp. (strain BH72).